The chain runs to 181 residues: UPF0397 protein str0306 (181 aa).

Helical transmembrane passes span alanine 11–phenylalanine 31, leucine 45–leucine 65, glycine 72–phenylalanine 92, isoleucine 109–isoleucine 129, and phenylalanine 147–isoleucine 167.

It belongs to the UPF0397 family.

It is found in the cell membrane. This Streptococcus thermophilus (strain CNRZ 1066) protein is UPF0397 protein str0306.